Here is a 1836-residue protein sequence, read N- to C-terminus: InaD-like protein (1836 aa).

Residues 1-65 (MPENPAAEKM…SIKQLKGQLS (65 aa)) form the L27 domain. 3 PDZ domains span residues 134-221 (YIDI…AREV), 248-328 (DVEL…ARDP), and 365-453 (NVEL…VRRK). Residues serine 455, serine 459, and serine 482 each carry the phosphoserine modification. The segment covering 456–466 (LSASPFEQPSS) has biased composition (polar residues). Positions 456–492 (LSASPFEQPSSREAVAEPPEVPELTGSLKPETNSRME) are disordered. In terms of domain architecture, PDZ 4 spans 555-641 (DEELQKYSKL…PFTLVCCRRL (87 aa)). Serine 647 bears the Phosphoserine mark. PDZ domains are found at residues 687 to 773 (TVEL…ICKP) and 1074 to 1166 (PRIV…VVQS). Over residues 1173 to 1191 (VIPSVNNKGKTPPQNQDQN) the composition is skewed to polar residues. Positions 1173-1232 (VIPSVNNKGKTPPQNQDQNTQEKKAKRHGTAPPPMKLPPPYRAPSADTEESEEDSALTDK) are disordered. The span at 1203–1214 (APPPMKLPPPYR) shows a compositional bias: pro residues. A Phosphoserine modification is found at serine 1217. Positions 1219–1228 (DTEESEEDSA) are enriched in acidic residues. Residues 1245 to 1328 (LHIIELEKDK…PTRVKLVFIR (84 aa)) form the PDZ 7 domain. Residues 1341–1448 (FPVPSHSPSP…ADVTGSGNFQ (108 aa)) are disordered. Residues 1372–1383 (PLPERESSKPED) show a composition bias toward basic and acidic residues. Polar residues-rich tracts occupy residues 1415-1426 (YSAQVSSSSQEI) and 1434-1448 (CQST…GNFQ). PDZ domains follow at residues 1472-1555 (EMII…VIYR) and 1568-1650 (VFLV…EIGR). Threonine 1545 carries the post-translational modification Phosphothreonine. The segment at 1657–1678 (ASSRKTSQNSQGDQHSAHSSCR) is disordered. Residues 1709–1795 (PRTVEIIREL…FGRIILQVVA (87 aa)) enclose the PDZ 10 domain. The interval 1813–1836 (SQLGSPTADRHPQDPEELLQRTAD) is disordered.

Forms a ternary complex with PALS1 and CRB1. Component of a complex whose core is composed of ARHGAP17, AMOT, PALS1, INADL/PATJ and PARD3/PAR3. Forms a heterotrimeric complex composed of MMP5, LIN7B and PATJ; the N-terminal L27 domain of PALS1 interacts with the L27 domain of PATJ and the C-terminal L27 domain of PALS1 interacts with the L27 domain of LIN7B. Component of a complex composed of CRB3, PALS1 and PATJ. As part of the Crumbs complex; interacts with WWP1, the interaction is enhanced by AMOTL2 and facilitates WWP1 localization to the plasma membrane. The Crumbs complex promotes monoubiquitination of AMOTL2 by WWP1, which activates the Hippo signaling pathway. Interacts (via N-terminus) with PALS1/PALS (via PDZ domain). Interacts with TJP3/ZO-3 and CLDN1/claudin-1. Interacts with ASIC3, KCNJ10, KCNJ15, GRIN2A, GRIN2B, GRIN2C, GRIN2D, NLGN2, and HTR2A. Interacts with MPP7. Directly interacts with HTR4. Interacts (via PDZ domain 8) with WWC1 (via the ADDV motif). Interacts with SLC6A4. Interacts (via C-terminus) with ARHGEF18. Interacts with NPHP1. Interacts with PARD3/PAR3. Interacts (via PDZ1-6 domains) with TJP1/ZO1; the interaction is required for attachment and extension of TJP1/ZO1 condensates along the apical cell interface. As to expression, abundantly expressed in germ cells, also expressed in testes and seminiferous tubules, with faint expression in Sertoli cells (at protein level).

The protein localises to the cell junction. The protein resides in the tight junction. Its subcellular location is the apical cell membrane. It localises to the cytoplasm. It is found in the perinuclear region. Scaffolding protein that facilitates the localization of proteins to the cell membrane. Required for the correct formation of tight junctions and epithelial apico-basal polarity. Acts (via its L27 domain) as an apical connector and elongation factor for multistranded TJP1/ZO1 condensates that form a tight junction belt, thereby required for the formation of the tight junction-mediated cell barrier. Positively regulates epithelial cell microtubule elongation and cell migration, possibly via facilitating localization of PRKCI/aPKC and PAR3D/PAR3 at the leading edge of migrating cells. Plays a role in the correct reorientation of the microtubule-organizing center during epithelial migration. May regulate the surface expression and/or function of ASIC3 in sensory neurons. May recruit ARHGEF18 to apical cell-cell boundaries. The protein is InaD-like protein of Rattus norvegicus (Rat).